A 339-amino-acid chain; its full sequence is Cathepsin B (339 aa).

The N-terminal stretch at 1–17 is a signal peptide; it reads MWWSLILLSCLLALTSA. Residues 18 to 79 constitute a propeptide, activation peptide; the sequence is HDKPSFHPLS…GRVAFGEDID (62 aa). 6 disulfide bridges follow: cysteine 93/cysteine 122, cysteine 105/cysteine 150, cysteine 141/cysteine 207, cysteine 142/cysteine 146, cysteine 179/cysteine 211, and cysteine 187/cysteine 198. The active site involves cysteine 108. Residue asparagine 192 is glycosylated (N-linked (GlcNAc...) asparagine). Residue lysine 220 is modified to N6-acetyllysine. Catalysis depends on residues histidine 278 and asparagine 298. The propeptide occupies 334–339; that stretch reads QYWGRF.

This sequence belongs to the peptidase C1 family. As to quaternary structure, dimer of a heavy chain and a light chain cross-linked by a disulfide bond. Interacts with SRPX2. Directly interacts with SHKBP1. Expressed in thyroid epithelial cells.

It localises to the lysosome. It is found in the melanosome. The protein localises to the secreted. The protein resides in the extracellular space. Its subcellular location is the apical cell membrane. It catalyses the reaction Hydrolysis of proteins with broad specificity for peptide bonds. Preferentially cleaves -Arg-Arg-|-Xaa bonds in small molecule substrates (thus differing from cathepsin L). In addition to being an endopeptidase, shows peptidyl-dipeptidase activity, liberating C-terminal dipeptides.. Functionally, thiol protease which is believed to participate in intracellular degradation and turnover of proteins. Cleaves matrix extracellular phosphoglycoprotein MEPE. Involved in the solubilization of cross-linked TG/thyroglobulin in the thyroid follicle lumen. Has also been implicated in tumor invasion and metastasis. The chain is Cathepsin B (Ctsb) from Mus musculus (Mouse).